A 357-amino-acid chain; its full sequence is tRNA N6-adenosine threonylcarbamoyltransferase (357 aa).

H115 and H119 together coordinate Fe cation. Substrate-binding positions include 137–141 (LASGG), D170, G183, and N281. D309 is a Fe cation binding site.

This sequence belongs to the KAE1 / TsaD family. Requires Fe(2+) as cofactor.

Its subcellular location is the cytoplasm. The catalysed reaction is L-threonylcarbamoyladenylate + adenosine(37) in tRNA = N(6)-L-threonylcarbamoyladenosine(37) in tRNA + AMP + H(+). Required for the formation of a threonylcarbamoyl group on adenosine at position 37 (t(6)A37) in tRNAs that read codons beginning with adenine. Is involved in the transfer of the threonylcarbamoyl moiety of threonylcarbamoyl-AMP (TC-AMP) to the N6 group of A37, together with TsaE and TsaB. TsaD likely plays a direct catalytic role in this reaction. The sequence is that of tRNA N6-adenosine threonylcarbamoyltransferase from Nitrobacter winogradskyi (strain ATCC 25391 / DSM 10237 / CIP 104748 / NCIMB 11846 / Nb-255).